We begin with the raw amino-acid sequence, 51 residues long: Sperm protamine P1 (51 aa).

2 cysteine pairs are disulfide-bonded: Cys7-Cys15 and Cys40-Cys48.

This sequence belongs to the protamine P1 family. In terms of assembly, cross-linked by interchain disulfide bonds around the DNA-helix. Testis.

The protein resides in the nucleus. It is found in the chromosome. In terms of biological role, protamines substitute for histones in the chromatin of sperm during the haploid phase of spermatogenesis. They compact sperm DNA into a highly condensed, stable and inactive complex. This is Sperm protamine P1 (PRM1) from Capra hircus (Goat).